A 455-amino-acid chain; its full sequence is Ammonium transporter Rh type B (455 aa).

The Cytoplasmic segment spans residues 1-13 (MAWSPRHSAGRRL). Residues 14 to 34 (QLPLLCLLLQGATAILFAVFV) form a helical membrane-spanning segment. Over 35–61 (RYNRETDAALWHWGNHSNADNEFYFRY) the chain is Extracellular. Residue Asn49 is glycosylated (N-linked (GlcNAc...) asparagine). A helical membrane pass occupies residues 62-82 (PSFQDVHAMIFVGFGFLMVFL). The Cytoplasmic segment spans residues 83–86 (QRYG). A helical membrane pass occupies residues 87 to 107 (FGSVGFTFLLAAFALQWSTLI). At 108–124 (QGFFHSFRGGYILVGME) the chain is on the extracellular side. Residues 125 to 145 (SMINADFCAGAVLISFGAVLG) form a helical membrane-spanning segment. Residues 146 to 151 (KTGPVQ) lie on the Cytoplasmic side of the membrane. A helical membrane pass occupies residues 152–172 (LLLMALLEVVLFGLNEFVLLS). Over 173 to 179 (LLEVKDA) the chain is Extracellular. The helical transmembrane segment at 180-200 (GGSMTIHTFGAYFGLILSRVL) threads the bilayer. The Cytoplasmic segment spans residues 201–219 (YRPQLEKSKHRQGSVYHSD). Residues 220–240 (LFAMIGTIFLWIFWPSFNSAP) form a helical membrane-spanning segment. Over 241 to 253 (TALGDGQHRTALN) the chain is Extracellular. The helical transmembrane segment at 254–274 (TYYSLTASTLSTFALSALVGG) threads the bilayer. Topologically, residues 275 to 277 (DGR) are cytoplasmic. Residues 278 to 298 (LDMVHVQNAALAGGVVVGTSA) traverse the membrane as a helical segment. A topological domain (extracellular) is located at residue Glu299. Residues 300–320 (MMLTPFGALAAGFLAGAISTL) traverse the membrane as a helical segment. The Cytoplasmic segment spans residues 321-343 (GYKFVTPILESKLKVQDTCGVHN). A helical transmembrane segment spans residues 344–364 (LHGMPGVLGALLGGLVAGLAT). Over 365–393 (REAYGDGLESVFPLIAEGQRSATSQAMHQ) the chain is Extracellular. The helical transmembrane segment at 394–414 (LFGLFVTLTFASVGGGLGGLL) threads the bilayer. Topologically, residues 415–455 (LRLPILDSPPDSQCYEDQIYWEVPGEHEHLAQGSEETETQA) are cytoplasmic. Positions 416-424 (RLPILDSPP) are interaction with ANK3. The Basolateral sorting signal motif lies at 429–432 (YEDQ).

The protein belongs to the ammonium transporter (TC 2.A.49) family. Rh subfamily. In terms of assembly, interacts (via C-terminus) with ANK2 and ANK3; required for targeting to the basolateral membrane. N-glycosylated.

It localises to the cell membrane. The protein resides in the basolateral cell membrane. The catalysed reaction is NH4(+)(in) = NH4(+)(out). The enzyme catalyses methylamine(out) = methylamine(in). It carries out the reaction CO2(out) = CO2(in). In terms of biological role, ammonium transporter involved in the maintenance of acid-base homeostasis. Transports ammonium and its related derivative methylammonium across the basolateral plasma membrane of epithelial cells likely contributing to renal transepithelial ammonia transport and ammonia metabolism. May transport either NH4(+) or NH3 ammonia species predominantly mediating an electrogenic NH4(+) transport. May act as a CO2 channel providing for renal acid secretion. This is Ammonium transporter Rh type B (RHBG) from Bos taurus (Bovine).